The primary structure comprises 258 residues: Hydroxyacylglutathione hydrolase (258 aa).

Zn(2+) contacts are provided by His-54, His-56, Asp-58, His-59, His-113, Asp-138, and His-176.

Belongs to the metallo-beta-lactamase superfamily. Glyoxalase II family. In terms of assembly, monomer. It depends on Zn(2+) as a cofactor.

It catalyses the reaction an S-(2-hydroxyacyl)glutathione + H2O = a 2-hydroxy carboxylate + glutathione + H(+). The protein operates within secondary metabolite metabolism; methylglyoxal degradation; (R)-lactate from methylglyoxal: step 2/2. In terms of biological role, thiolesterase that catalyzes the hydrolysis of S-D-lactoyl-glutathione to form glutathione and D-lactic acid. This Synechococcus sp. (strain ATCC 27144 / PCC 6301 / SAUG 1402/1) (Anacystis nidulans) protein is Hydroxyacylglutathione hydrolase.